We begin with the raw amino-acid sequence, 646 residues long: Exoribonuclease 2 (646 aa).

One can recognise an RNB domain in the interval 191–518 (RIDLTALDFV…NHRLLKAIIQ (328 aa)). An S1 motif domain is found at 563–645 (DKTFSAEIVD…ETRNIVARPV (83 aa)).

Belongs to the RNR ribonuclease family. RNase II subfamily.

It localises to the cytoplasm. It catalyses the reaction Exonucleolytic cleavage in the 3'- to 5'-direction to yield nucleoside 5'-phosphates.. In terms of biological role, involved in mRNA degradation. Hydrolyzes single-stranded polyribonucleotides processively in the 3' to 5' direction. This Xenorhabdus bovienii (strain SS-2004) (Xenorhabdus nematophila subsp. bovienii) protein is Exoribonuclease 2.